The primary structure comprises 215 residues: Adenylate kinase (215 aa).

Position 10–15 (10–15 (GAGKGT)) interacts with ATP. The interval 30-59 (STGDMLRAAVKAETELGLKAKSVMDSGGLV) is NMP. Residues Thr31, Arg36, 57–59 (GLV), 85–88 (GFPR), and Gln92 each bind AMP. The tract at residues 122–159 (GRRVHEGSGRIYHTIFNPPKVECIDDVTGEPLLQRKDD) is LID. Residues Arg123 and 132-133 (IY) contribute to the ATP site. Positions 156 and 167 each coordinate AMP. Residue Gly201 participates in ATP binding.

The protein belongs to the adenylate kinase family. Monomer.

The protein localises to the cytoplasm. The enzyme catalyses AMP + ATP = 2 ADP. The protein operates within purine metabolism; AMP biosynthesis via salvage pathway; AMP from ADP: step 1/1. Its function is as follows. Catalyzes the reversible transfer of the terminal phosphate group between ATP and AMP. Plays an important role in cellular energy homeostasis and in adenine nucleotide metabolism. The sequence is that of Adenylate kinase from Pseudomonas savastanoi pv. phaseolicola (strain 1448A / Race 6) (Pseudomonas syringae pv. phaseolicola (strain 1448A / Race 6)).